Reading from the N-terminus, the 257-residue chain is Protein UL133 (257 aa).

2 consecutive transmembrane segments (helical) span residues 14-34 and 45-65; these read WGVP…IWCL and PGIA…AYLI. Residues 149–232 form a disordered region; sequence PTVFVPPPSE…AMPQMPPGVA (84 aa). Residues 164–175 show a composition bias toward pro residues; that stretch reads VIPPQPPTPTSE. Over residues 179–193 the composition is skewed to basic residues; it reads KKGRAKDKPKGRPKN. Residues 214-228 show a composition bias toward pro residues; sequence GGPPDASPPAMPQMP.

It localises to the host Golgi apparatus membrane. This Human cytomegalovirus (strain Merlin) (HHV-5) protein is Protein UL133 (UL133).